Reading from the N-terminus, the 236-residue chain is 2-C-methyl-D-erythritol 4-phosphate cytidylyltransferase (236 aa).

This sequence belongs to the IspD/TarI cytidylyltransferase family. IspD subfamily.

The catalysed reaction is 2-C-methyl-D-erythritol 4-phosphate + CTP + H(+) = 4-CDP-2-C-methyl-D-erythritol + diphosphate. It functions in the pathway isoprenoid biosynthesis; isopentenyl diphosphate biosynthesis via DXP pathway; isopentenyl diphosphate from 1-deoxy-D-xylulose 5-phosphate: step 2/6. Functionally, catalyzes the formation of 4-diphosphocytidyl-2-C-methyl-D-erythritol from CTP and 2-C-methyl-D-erythritol 4-phosphate (MEP). The sequence is that of 2-C-methyl-D-erythritol 4-phosphate cytidylyltransferase from Pseudomonas syringae pv. tomato (strain ATCC BAA-871 / DC3000).